The primary structure comprises 514 residues: Nucleus accumbens-associated protein 1 (514 aa).

Positions 30 to 94 (CDVSVVVKGH…CYTGRLSMNM (65 aa)) constitute a BTB domain. Residue Lys167 forms a Glycyl lysine isopeptide (Lys-Gly) (interchain with G-Cter in SUMO1); alternate linkage. Lys167 participates in a covalent cross-link: Glycyl lysine isopeptide (Lys-Gly) (interchain with G-Cter in SUMO2); alternate. Lys182 participates in a covalent cross-link: Glycyl lysine isopeptide (Lys-Gly) (interchain with G-Cter in SUMO2). 2 disordered regions span residues 183–205 (RLWDSSQKEAGGSGGNNGSRKMA) and 242–279 (PSMSERTSPGTSSAYTSDSPSSYHNEEDEEEDAGEEGT). Ser187 is modified (phosphoserine). Positions 242–251 (PSMSERTSPG) are enriched in polar residues. At Ser245 the chain carries Phosphoserine; by PKC. The span at 252–264 (TSSAYTSDSPSSY) shows a compositional bias: low complexity. Residues 267–279 (EEDEEEDAGEEGT) are compositionally biased toward acidic residues. Residues Lys304, Lys438, Lys466, and Lys485 each participate in a glycyl lysine isopeptide (Lys-Gly) (interchain with G-Cter in SUMO2) cross-link. The region spanning 360 to 457 (GTNVYITRAQ…DMCTNARRVV (98 aa)) is the BEN domain. Ser492 and Ser496 each carry phosphoserine.

In terms of assembly, homooligomer; mediated by the BTB domain. Interacts with HDAC3 and HDAC4. Interacts (via BTB domain) with CUL3, PSMD7 and RCOR1. As to expression, ubiquitously expressed with higher expression in the brain, kidney and liver, and at lower levels in heart, lung and testes.

It is found in the nucleus. It localises to the cytoplasm. Its function is as follows. Functions as a transcriptional repressor. Seems to function as a transcriptional corepressor in neuronal cells through recruitment of HDAC3 and HDAC4. Contributes to tumor progression, and tumor cell proliferation and survival. This may be mediated at least in part through repressing transcriptional activity of GADD45GIP1. Required for recruiting the proteasome from the nucleus to the cytoplasm and dendritic spines. Involved in the acute behavioral and neurological responses to cocaine and amphetamines. The chain is Nucleus accumbens-associated protein 1 (Nacc1) from Mus musculus (Mouse).